Consider the following 132-residue polypeptide: Outer membrane protein assembly factor BamE (132 aa).

Positions 1–16 (MQKLVLTLLVTSLLAG) are cleaved as a signal peptide. Cysteine 17 is lipidated: N-palmitoyl cysteine. Cysteine 17 carries the S-diacylglycerol cysteine lipid modification.

It belongs to the BamE family. Part of the Bam complex.

Its subcellular location is the cell outer membrane. Functionally, part of the outer membrane protein assembly complex, which is involved in assembly and insertion of beta-barrel proteins into the outer membrane. This is Outer membrane protein assembly factor BamE from Acinetobacter pittii (strain PHEA-2).